Here is a 362-residue protein sequence, read N- to C-terminus: Notoamide biosynthesis cluster protein J' (362 aa).

The N-terminal stretch at 1-22 (MRNMATMLHLLTLILLTSPAST) is a signal peptide. Residues Asn-157, Asn-190, Asn-280, and Asn-338 are each glycosylated (N-linked (GlcNAc...) asparagine).

Part of the gene cluster that mediates the biosynthesis of notoamide, a fungal indole alkaloid that belongs to a family of natural products containing a characteristic bicyclo[2.2.2]diazaoctane core. The first step of notoamide biosynthesis involves coupling of L-proline and L-tryptophan by the bimodular NRPS notE', to produce cyclo-L-tryptophan-L-proline called brevianamide F. The reverse prenyltransferase notF' then acts as a deoxybrevianamide E synthase and converts brevianamide F to deoxybrevianamide E via reverse prenylation at C-2 of the indole ring leading to the bicyclo[2.2.2]diazaoctane core. Deoxybrevianamide E is further hydroxylated at C-6 of the indole ring, likely catalyzed by the cytochrome P450 monooxygenase notG', to yield 6-hydroxy-deoxybrevianamide E. 6-hydroxy-deoxybrevianamide E is a specific substrate of the prenyltransferase notC' for normal prenylation at C-7 to produce 6-hydroxy-7-prenyl-deoxybrevianamide, also called notoamide S. As the proposed pivotal branching point in notoamide biosynthesis, notoamide S can be diverted to notoamide E through an oxidative pyran ring closure putatively catalyzed by either notH' cytochrome P450 monooxygenase or the notD' FAD-linked oxidoreductase. This step would be followed by an indole 2,3-epoxidation-initiated pinacol-like rearrangement catalyzed by the notB' FAD-dependent monooxygenase leading to the formation of notoamide C and notoamide D. On the other hand notoamide S is converted to notoamide T by notH' (or notD'), a bifunctional oxidase that also functions as the intramolecular Diels-Alderase responsible for generation of (-)-notoamide T. To generate antipodal (+)-notoaminide T, notH (or notD) in Aspergillus strain MF297-2 is expected to catalyze a Diels-Alder reaction leading to the opposite stereochemistry. The remaining oxidoreductase notD' (or notH') likely catalyzes the oxidative pyran ring formation to yield (-)-stephacidin A. The FAD-dependent monooxygenase notI' is highly similar to notB' and is predicted to catalyze a similar conversion from (-)-stephacidin A to (+)-notoamide B via the 2,3-epoxidation of (-)-stephacidin A followed by a pinacol-type rearrangement. Finally, it remains unclear which enzyme could be responsible for the final hydroxylation steps leading to notoamide A and sclerotiamide. The function of notJ' in the notoamide biosynthesis has not been determined yet. This is Notoamide biosynthesis cluster protein J' from Aspergillus versicolor.